Reading from the N-terminus, the 248-residue chain is Granzyme B (248 aa).

The first 18 residues, Met1–Ala18, serve as a signal peptide directing secretion. Positions Gly19–Glu20 are cleaved as a propeptide — activation peptide. The 226-residue stretch at Ile21 to Lys246 folds into the Peptidase S1 domain. A disulfide bond links Cys50 and Cys66. Residues His65 and Asp109 each act as charge relay system in the active site. 2 cysteine pairs are disulfide-bonded: Cys143-Cys210 and Cys174-Cys189. Residue Ser204 is the Charge relay system of the active site.

The protein belongs to the peptidase S1 family. Granzyme subfamily.

Its subcellular location is the secreted. It localises to the cytolytic granule. The enzyme catalyses Preferential cleavage: -Asp-|-Xaa- &gt;&gt; -Asn-|-Xaa- &gt; -Met-|-Xaa-, -Ser-|-Xaa-.. Inactivated by the serine protease inhibitor diisopropylfluorophosphate. Functionally, abundant protease in the cytosolic granules of cytotoxic T-cells and NK-cells which activates caspase-independent pyroptosis when delivered into the target cell through the immunological synapse. It cleaves after Asp. Once delivered into the target cell, acts by catalyzing cleavage of gasdermin-E (GSDME), releasing the pore-forming moiety of GSDME, thereby triggering pyroptosis and target cell death. Seems to be linked to an activation cascade of caspases (aspartate-specific cysteine proteases) responsible for apoptosis execution. Cleaves caspase-3 and -9 (CASP3 and CASP9, respectively) to give rise to active enzymes mediating apoptosis. Cleaves and activates CASP7 in response to bacterial infection, promoting plasma membrane repair. The chain is Granzyme B (Gzmb) from Rattus norvegicus (Rat).